Reading from the N-terminus, the 612-residue chain is MSAELIAVYKDEQIIDLESAKVLGLSDGIKALKGTEPIYFDDSPLALEVIRHSCAHLLAQSLKALYPDAKFFVGPVVEEGFYYDFKTTSKISEEDLPKIEAKMKEFAKSKLAITKETLTREQALERFKGDELKHAVMSKISGDIFGVYQQGEFEDLCKGPHLPNTRFLNHFKLTKLAGAYLGGDENNEMLIRIYGIAFATKEGLKDYLFQIEEAKKRDHRKLGVELGLFSFDDEIGAGLPLWLPKGARLRKRIEDLLSQALLLRGYEPVKGPEILKSDVWKISGHYDNYKENMYFTTIDEQEYGIKPMNCVGHIKVYQSALHSYRDLPLRFYEYGVVHRHEKSGVLHGLLRVREFTQDDAHIFCSFEQIQSEVSAILDFTHKIMQAFGFSYEMELSTRPAKSIGDDKVWEKATNALKEALKEHRIDYKIDEGGGAFYGPKIDIKITDALKRKWQCGTIQVDMNLPERFKLAFTNEYNHAEQPVMIHRAILGSFERFIAILSEHFGGNFPFFVAPTQIALIPINEEHHVFALKLKEALKKCDIFVEVLDKNDSLNKKVRLAEKQKIPMILVLGNEEVETEILSIRDREKQAQYKMPLKEFLNMVESKMQEVSF.

The catalytic stretch occupies residues 218 to 509 (DHRKLGVELG…LSEHFGGNFP (292 aa)). 3 residues coordinate Zn(2+): Cys-310, His-361, and His-486.

It belongs to the class-II aminoacyl-tRNA synthetase family. As to quaternary structure, homodimer. The cofactor is Zn(2+).

It is found in the cytoplasm. It catalyses the reaction tRNA(Thr) + L-threonine + ATP = L-threonyl-tRNA(Thr) + AMP + diphosphate + H(+). In terms of biological role, catalyzes the attachment of threonine to tRNA(Thr) in a two-step reaction: L-threonine is first activated by ATP to form Thr-AMP and then transferred to the acceptor end of tRNA(Thr). Also edits incorrectly charged L-seryl-tRNA(Thr). The sequence is that of Threonine--tRNA ligase from Helicobacter pylori (strain J99 / ATCC 700824) (Campylobacter pylori J99).